A 159-amino-acid chain; its full sequence is MQGDPEVLRLLNEQLTSELTAINQYFLHSKMQDNWGFTELAEHTRAESFDEMRHAEAITDRILLLDGLPNYQRLFSLRIGQTLREQFEADLAIEYEVMDRLKPAIILCREKQDSTTATLFEQIVADEEKHIDYLETQLELMDKLGVELYSAQCVSRPPS.

A Ferritin-like diiron domain is found at Met-1–Gly-145. Fe cation is bound by residues Glu-18 and Glu-51. Met-52 provides a ligand contact to heme b. Fe cation-binding residues include His-54, Glu-94, Glu-127, and His-130.

Belongs to the bacterioferritin family. As to quaternary structure, homooligomer of 24 subunits, arranged as 12 dimers, that are packed together to form an approximately spherical molecule with a central cavity, in which large amounts of iron can be deposited. It depends on heme b as a cofactor.

It carries out the reaction 4 Fe(2+) + O2 + 4 H(+) = 4 Fe(3+) + 2 H2O. The enzyme catalyses Fe(2+)(in) = Fe(2+)(out). Iron-storage protein, whose ferroxidase center binds Fe(2+), oxidizes it using dioxygen to Fe(3+), and participates in the subsequent Fe(3+) oxide mineral core formation within the central cavity of the BFR protein shell. This Mycolicibacterium paratuberculosis (strain ATCC BAA-968 / K-10) (Mycobacterium paratuberculosis) protein is Bacterioferritin (bfr).